Consider the following 691-residue polypeptide: TBC1 domain family member 15 (691 aa).

A2 carries the post-translational modification N-acetylalanine. Phosphoserine is present on residues S23, S70, S205, P213, and S274. Residues 346–556 (GLSHALRKQA…RLWEVMWTEL (211 aa)) form the Rab-GAP TBC domain. 2 positions are modified to phosphoserine: S640 and S675. T689 is modified (phosphothreonine).

As to quaternary structure, interacts with non-phosphorylated form of RAB8A; phosphorylation of RAB8A at 'Thr-72' disrupts this interaction. Interacts with ARMC12. As to expression, ubiquitous.

Its subcellular location is the cytoplasm. Acts as a GTPase activating protein for RAB7A. Does not act on RAB4, RAB5 or RAB6. In Homo sapiens (Human), this protein is TBC1 domain family member 15 (TBC1D15).